We begin with the raw amino-acid sequence, 549 residues long: Urocanate hydratase (549 aa).

NAD(+)-binding positions include 46 to 47, Q124, E190, R195, 236 to 237, 257 to 261, 267 to 268, and Y316; these read GG, NA, QTSAH, and YV. The active site involves C404. Residue G486 coordinates NAD(+).

The protein belongs to the urocanase family. It depends on NAD(+) as a cofactor.

The protein resides in the cytoplasm. It carries out the reaction 4-imidazolone-5-propanoate = trans-urocanate + H2O. The protein operates within amino-acid degradation; L-histidine degradation into L-glutamate; N-formimidoyl-L-glutamate from L-histidine: step 2/3. Catalyzes the conversion of urocanate to 4-imidazolone-5-propionate. This chain is Urocanate hydratase, found in Thermoanaerobacter pseudethanolicus (strain ATCC 33223 / 39E) (Clostridium thermohydrosulfuricum).